The chain runs to 258 residues: Dehydrodolichyl diphosphate synthase complex subunit nus1 (258 aa).

The chain crosses the membrane as a helical span at residues 5 to 21 (IFFYLALWVIQSVYGAW).

It belongs to the UPP synthase family. As to quaternary structure, forms an active dehydrodolichyl diphosphate synthase complex with SPAC4D7.04c. It depends on Mg(2+) as a cofactor.

The protein resides in the endoplasmic reticulum membrane. It catalyses the reaction n isopentenyl diphosphate + (2E,6E)-farnesyl diphosphate = a di-trans,poly-cis-polyprenyl diphosphate + n diphosphate. It participates in protein modification; protein glycosylation. With SPAC4D7.04c, forms the dehydrodolichyl diphosphate synthase (DDS) complex, an essential component of the dolichol monophosphate (Dol-P) biosynthetic machinery. Adds multiple copies of isopentenyl pyrophosphate (IPP) to farnesyl pyrophosphate (FPP) to produce dehydrodolichyl diphosphate (Dedol-PP), a precursor of dolichol which is utilized as a sugar carrier in protein glycosylation in the endoplasmic reticulum (ER). This is Dehydrodolichyl diphosphate synthase complex subunit nus1 (nus1) from Schizosaccharomyces pombe (strain 972 / ATCC 24843) (Fission yeast).